Reading from the N-terminus, the 461-residue chain is V-type ATP synthase beta chain (461 aa).

Belongs to the ATPase alpha/beta chains family.

Its function is as follows. Produces ATP from ADP in the presence of a proton gradient across the membrane. The V-type beta chain is a regulatory subunit. This chain is V-type ATP synthase beta chain, found in Streptococcus pneumoniae (strain CGSP14).